The following is a 167-amino-acid chain: Endoribonuclease YbeY (167 aa).

Positions 132, 136, and 142 each coordinate Zn(2+).

This sequence belongs to the endoribonuclease YbeY family. The cofactor is Zn(2+).

The protein resides in the cytoplasm. Functionally, single strand-specific metallo-endoribonuclease involved in late-stage 70S ribosome quality control and in maturation of the 3' terminus of the 16S rRNA. This chain is Endoribonuclease YbeY, found in Clostridium tetani (strain Massachusetts / E88).